Here is a 151-residue protein sequence, read N- to C-terminus: Large ribosomal subunit protein bL9 (151 aa).

The protein belongs to the bacterial ribosomal protein bL9 family.

Binds to the 23S rRNA. This Bordetella bronchiseptica (strain ATCC BAA-588 / NCTC 13252 / RB50) (Alcaligenes bronchisepticus) protein is Large ribosomal subunit protein bL9.